The chain runs to 141 residues: Proteasome maturation protein (141 aa).

Lys-39 is covalently cross-linked (Glycyl lysine isopeptide (Lys-Gly) (interchain with G-Cter in SUMO2)). Residues 68 to 72 (RNIQG) carry the High-affinity association with the preproteasome motif.

It belongs to the POMP/UMP1 family. Constituent of preproteasomes, but not of mature 20S proteasomes. Within the preproteasome, may directly interact with PSMB1/beta6, PSMB4/beta7, PSMB5/beta5, PSMB6/beta1 and PSMB9/beta1i. Interaction with PSMB8/beta5i has been observed in PubMed:10973495, but not in PubMed:10926487. Forms tetramers. Strongly expressed from the basal layer to the granular layer of healthy epidermis, whereas in KLICK patients there is a gradual decrease of expression toward the granular layer.

The protein resides in the cytoplasm. It localises to the cytosol. The protein localises to the nucleus. It is found in the microsome membrane. Molecular chaperone essential for the assembly of standard proteasomes and immunoproteasomes. Degraded after completion of proteasome maturation. Mediates the association of 20S preproteasome with the endoplasmic reticulum. In Homo sapiens (Human), this protein is Proteasome maturation protein.